The following is a 132-amino-acid chain: Agouti-signaling protein (132 aa).

Positions 1–22 are cleaved as a signal peptide; it reads MDVTRLLLATLLVFLCFFTAYS. N-linked (GlcNAc...) asparagine glycosylation occurs at N39. The tract at residues 61 to 87 is disordered; sequence QISRKEAEKKRSSKKEASMKKVARPRT. A compositionally biased stretch (basic and acidic residues) spans 63–79; the sequence is SRKEAEKKRSSKKEASM. Intrachain disulfides connect C93/C108, C100/C114, C107/C125, C111/C132, and C116/C123. Residues 93–132 form the Agouti domain; sequence CVATRDSCKSPAPACCDPCASCQCRFFRSACSCRVLSLNC.

The protein resides in the secreted. In terms of biological role, involved in the regulation of melanogenesis. The binding of ASP to MC1R precludes alpha-MSH initiated signaling and thus blocks production of cAMP, leading to a down-regulation of eumelanogenesis (brown/black pigment) and thus increasing synthesis of pheomelanin (yellow/red pigment). The polypeptide is Agouti-signaling protein (ASIP) (Macaca nigra (Celebes black macaque)).